The following is a 216-amino-acid chain: Protein-L-isoaspartate O-methyltransferase 1 (216 aa).

Residue Ser-60 is part of the active site.

The protein belongs to the methyltransferase superfamily. L-isoaspartyl/D-aspartyl protein methyltransferase family.

The protein localises to the cytoplasm. It catalyses the reaction [protein]-L-isoaspartate + S-adenosyl-L-methionine = [protein]-L-isoaspartate alpha-methyl ester + S-adenosyl-L-homocysteine. In terms of biological role, catalyzes the methyl esterification of L-isoaspartyl residues in peptides and proteins that result from spontaneous decomposition of normal L-aspartyl and L-asparaginyl residues. It plays a role in the repair and/or degradation of damaged proteins. In Archaeoglobus fulgidus (strain ATCC 49558 / DSM 4304 / JCM 9628 / NBRC 100126 / VC-16), this protein is Protein-L-isoaspartate O-methyltransferase 1 (pcm1).